The chain runs to 551 residues: CTP synthase (551 aa).

Residues 1-267 (MSGTKYIFVT…DALVLEKLGL (267 aa)) form an amidoligase domain region. Serine 15 contributes to the CTP binding site. Serine 15 is a UTP binding site. 16 to 21 (SIGKGT) provides a ligand contact to ATP. An L-glutamine-binding site is contributed by tyrosine 56. Residue aspartate 73 participates in ATP binding. Mg(2+)-binding residues include aspartate 73 and glutamate 141. CTP-binding positions include 148-150 (DIE), 188-193 (KTKPTQ), and lysine 224. Residues 188–193 (KTKPTQ) and lysine 224 contribute to the UTP site. Residues 292–534 (RVAVIGKYIR…VGACLGAAEE (243 aa)) enclose the Glutamine amidotransferase type-1 domain. Glycine 355 is an L-glutamine binding site. Cysteine 382 (nucleophile; for glutamine hydrolysis) is an active-site residue. L-glutamine contacts are provided by residues 383–386 (LGMQ), glutamate 406, and arginine 462. Catalysis depends on residues histidine 507 and glutamate 509.

This sequence belongs to the CTP synthase family. In terms of assembly, homotetramer.

The catalysed reaction is UTP + L-glutamine + ATP + H2O = CTP + L-glutamate + ADP + phosphate + 2 H(+). The enzyme catalyses L-glutamine + H2O = L-glutamate + NH4(+). It carries out the reaction UTP + NH4(+) + ATP = CTP + ADP + phosphate + 2 H(+). It functions in the pathway pyrimidine metabolism; CTP biosynthesis via de novo pathway; CTP from UDP: step 2/2. With respect to regulation, allosterically activated by GTP, when glutamine is the substrate; GTP has no effect on the reaction when ammonia is the substrate. The allosteric effector GTP functions by stabilizing the protein conformation that binds the tetrahedral intermediate(s) formed during glutamine hydrolysis. Inhibited by the product CTP, via allosteric rather than competitive inhibition. Catalyzes the ATP-dependent amination of UTP to CTP with either L-glutamine or ammonia as the source of nitrogen. Regulates intracellular CTP levels through interactions with the four ribonucleotide triphosphates. The chain is CTP synthase from Rubrobacter xylanophilus (strain DSM 9941 / JCM 11954 / NBRC 16129 / PRD-1).